Consider the following 1367-residue polypeptide: DNA-directed RNA polymerase subunit beta' (1367 aa).

Residues 1–34 (MTSTSPKSRKSSSKRKGSKKKAARSKNVIPPLSK) form a disordered region. The span at 7–24 (KSRKSSSKRKGSKKKAAR) shows a compositional bias: basic residues. Residues Cys-250, Cys-317, Cys-324, and Cys-327 each contribute to the Zn(2+) site. The disordered stretch occupies residues 1306-1367 (SVLDDPSDAD…LQEEGLLSDE (62 aa)). Residues 1355–1367 (LEGLQEEGLLSDE) show a composition bias toward low complexity.

This sequence belongs to the RNA polymerase beta' chain family. RpoC2 subfamily. In cyanobacteria the RNAP catalytic core is composed of 2 alpha, 1 beta, 1 beta', 1 gamma and 1 omega subunit. When a sigma factor is associated with the core the holoenzyme is formed, which can initiate transcription. It depends on Zn(2+) as a cofactor.

The enzyme catalyses RNA(n) + a ribonucleoside 5'-triphosphate = RNA(n+1) + diphosphate. Functionally, DNA-dependent RNA polymerase catalyzes the transcription of DNA into RNA using the four ribonucleoside triphosphates as substrates. The polypeptide is DNA-directed RNA polymerase subunit beta' (Prochlorococcus marinus (strain SARG / CCMP1375 / SS120)).